Here is a 1609-residue protein sequence, read N- to C-terminus: Probable outer membrane protein pmp21 (1609 aa).

The first 30 residues, Met1–Glu30, serve as a signal peptide directing secretion. The segment covering Phe132–Val145 has biased composition (polar residues). Disordered regions lie at residues Phe132–Glu183 and Thr640–Pro677. Basic and acidic residues-rich tracts occupy residues Ile149–Ser175 and Asn651–Glu672. Residues Glu1328 to Phe1609 enclose the Autotransporter domain.

Belongs to the PMP outer membrane protein family.

Its subcellular location is the secreted. It is found in the cell wall. The protein localises to the cell outer membrane. This chain is Probable outer membrane protein pmp21 (pmp21), found in Chlamydia pneumoniae (Chlamydophila pneumoniae).